We begin with the raw amino-acid sequence, 422 residues long: Putative polyketide beta-ketoacyl synthase 1 (422 aa).

One can recognise a Ketosynthase family 3 (KS3) domain in the interval 2 to 416 (SRRVVVTGIG…GFQSAVVLTG (415 aa)). Catalysis depends on for beta-ketoacyl synthase activity residues C169, H309, and H346.

Belongs to the thiolase-like superfamily. Beta-ketoacyl-ACP synthases family.

Involved in developmentally regulated synthesis of a compound biosynthetically related to polyketide antibiotics which is essential for spore color in Streptomyces halstedii. The polypeptide is Putative polyketide beta-ketoacyl synthase 1 (sch1) (Streptomyces halstedii).